The chain runs to 299 residues: Taste receptor type 2 member 16 (299 aa).

Residues 1 to 5 (MVPTQ) are Extracellular-facing. Residues 6 to 26 (VTIFSIIMYVLESLVIIVQSC) traverse the membrane as a helical segment. The Cytoplasmic segment spans residues 27 to 47 (TTVAVLFREWMHFQRLSPVET). A helical transmembrane segment spans residues 48–68 (ILISLGISHFCLQWTSMLYNF). Topologically, residues 69-82 (GTYSRPVLLFWKVS) are extracellular. Residues 83–103 (VVWEFMNILTFWLTSWLAVLY) form a helical membrane-spanning segment. Topologically, residues 104–125 (CVKVSSFTHPIFLWLRMKILKL) are cytoplasmic. The helical transmembrane segment at 126 to 146 (VLWLILGALIASCLSIIPSVV) threads the bilayer. The Extracellular segment spans residues 147-183 (KYHIQMELVTLDNLPKNNSLILRLQQFEWYFSNPLKM). Asn163 carries an N-linked (GlcNAc...) asparagine glycan. Residues 184-204 (IGFGIPFFVFLASIILLTVSL) traverse the membrane as a helical segment. Residues 205–233 (VQHWVQMKHYSSSNSSLKAQFTVLKSLAT) are Cytoplasmic-facing. A helical transmembrane segment spans residues 234–254 (FFTFFTSYFLTIVISFIGTVF). Over 255 to 258 (DKKS) the chain is Extracellular. Residues 259–279 (WFWVCEAVIYGLVCIHFTSLM) form a helical membrane-spanning segment. The Cytoplasmic portion of the chain corresponds to 280–299 (MSNPALKKALKLQFWSPEPS).

Belongs to the G-protein coupled receptor T2R family. In terms of assembly, interacts with RTP3 and RTP4.

Its subcellular location is the cell membrane. Its function is as follows. Gustducin-coupled receptor implicated in the perception of bitter compounds in the oral cavity and the gastrointestinal tract. Signals through PLCB2 and the calcium-regulated cation channel TRPM5. The sequence is that of Taste receptor type 2 member 16 (Tas2r16) from Mus musculus (Mouse).